We begin with the raw amino-acid sequence, 489 residues long: Adenylosuccinate synthetase 2, chloroplastic (489 aa).

The N-terminal 54 residues, 1 to 54 (MPLASLSLDPAPFPLIRPAAGWSGRVLPVPGPAPRLCRPLRAAPVAPATTDEPS), are a transit peptide targeting the chloroplast. Residues 76-82 (GDEGKGK) and 104-106 (GHT) contribute to the GTP site. D77 serves as the catalytic Proton acceptor. Residues D77 and G104 each coordinate Mg(2+). IMP contacts are provided by residues 77–80 (DEGK), 102–105 (NAGH), T194, R208, Q288, T303, and R367. Catalysis depends on H105, which acts as the Proton donor. 363–369 (TTTGRPR) serves as a coordination point for substrate. Residues R369, 395–397 (KLD), and 478–480 (GVG) contribute to the GTP site.

It belongs to the adenylosuccinate synthetase family. In terms of assembly, homodimer. The cofactor is Mg(2+).

It localises to the plastid. The protein resides in the chloroplast. The catalysed reaction is IMP + L-aspartate + GTP = N(6)-(1,2-dicarboxyethyl)-AMP + GDP + phosphate + 2 H(+). Its pathway is purine metabolism; AMP biosynthesis via de novo pathway; AMP from IMP: step 1/2. In terms of biological role, plays an important role in the de novo pathway and in the salvage pathway of purine nucleotide biosynthesis. Catalyzes the first committed step in the biosynthesis of AMP from IMP. The polypeptide is Adenylosuccinate synthetase 2, chloroplastic (Sorghum bicolor (Sorghum)).